Reading from the N-terminus, the 206-residue chain is Large ribosomal subunit protein uL4 (206 aa).

Residues 48–59 show a composition bias toward basic and acidic residues; sequence THDTKTRSEVRG. The segment at 48–77 is disordered; sequence THDTKTRSEVRGGGRKPWRQKGTGRARHGS. Positions 60-77 are enriched in basic residues; it reads GGRKPWRQKGTGRARHGS.

Belongs to the universal ribosomal protein uL4 family. As to quaternary structure, part of the 50S ribosomal subunit.

One of the primary rRNA binding proteins, this protein initially binds near the 5'-end of the 23S rRNA. It is important during the early stages of 50S assembly. It makes multiple contacts with different domains of the 23S rRNA in the assembled 50S subunit and ribosome. Its function is as follows. Forms part of the polypeptide exit tunnel. This is Large ribosomal subunit protein uL4 from Pelotomaculum thermopropionicum (strain DSM 13744 / JCM 10971 / SI).